The primary structure comprises 417 residues: NADH-quinone oxidoreductase subunit D (417 aa).

This sequence belongs to the complex I 49 kDa subunit family. In terms of assembly, NDH-1 is composed of 14 different subunits. Subunits NuoB, C, D, E, F, and G constitute the peripheral sector of the complex.

The protein localises to the cell inner membrane. It catalyses the reaction a quinone + NADH + 5 H(+)(in) = a quinol + NAD(+) + 4 H(+)(out). Its function is as follows. NDH-1 shuttles electrons from NADH, via FMN and iron-sulfur (Fe-S) centers, to quinones in the respiratory chain. The immediate electron acceptor for the enzyme in this species is believed to be ubiquinone. Couples the redox reaction to proton translocation (for every two electrons transferred, four hydrogen ions are translocated across the cytoplasmic membrane), and thus conserves the redox energy in a proton gradient. The sequence is that of NADH-quinone oxidoreductase subunit D from Methylobacillus flagellatus (strain ATCC 51484 / DSM 6875 / VKM B-1610 / KT).